The following is a 410-amino-acid chain: Elongation factor Tu, chloroplastic (410 aa).

Residues 10–214 (KPHVNIGTIG…QVDAYIPTPE (205 aa)) enclose the tr-type G domain. A G1 region spans residues 19–26 (GHVDHGKT). 19–26 (GHVDHGKT) contributes to the GTP binding site. Thr-26 is a Mg(2+) binding site. The G2 stretch occupies residues 60-64 (GITIN). The segment at 81 to 84 (DCPG) is G3. Residues 81 to 85 (DCPGH) and 136 to 139 (NKED) each bind GTP. The tract at residues 136-139 (NKED) is G4. The G5 stretch occupies residues 174-176 (SAL).

Belongs to the TRAFAC class translation factor GTPase superfamily. Classic translation factor GTPase family. EF-Tu/EF-1A subfamily.

It localises to the plastid. The protein resides in the chloroplast. It catalyses the reaction GTP + H2O = GDP + phosphate + H(+). Functionally, GTP hydrolase that promotes the GTP-dependent binding of aminoacyl-tRNA to the A-site of ribosomes during protein biosynthesis. In Chlorokybus atmophyticus (Soil alga), this protein is Elongation factor Tu, chloroplastic (tufA).